Consider the following 1463-residue polypeptide: DNA polymerase III PolC-type (1463 aa).

One can recognise an Exonuclease domain in the interval 425 to 581 (YVVFDVETTG…YDAEATGRLL (157 aa)).

It belongs to the DNA polymerase type-C family. PolC subfamily.

It is found in the cytoplasm. It carries out the reaction DNA(n) + a 2'-deoxyribonucleoside 5'-triphosphate = DNA(n+1) + diphosphate. Functionally, required for replicative DNA synthesis. This DNA polymerase also exhibits 3' to 5' exonuclease activity. The chain is DNA polymerase III PolC-type from Streptococcus pneumoniae serotype 4 (strain ATCC BAA-334 / TIGR4).